Reading from the N-terminus, the 186-residue chain is Guanylate kinase (186 aa).

One can recognise a Guanylate kinase-like domain in the interval 4–182 (GKLIVLTGPS…TLQNLDKILF (179 aa)). 11-18 (GPSGVGKG) is a binding site for ATP.

Belongs to the guanylate kinase family.

Its subcellular location is the cytoplasm. The catalysed reaction is GMP + ATP = GDP + ADP. In terms of biological role, essential for recycling GMP and indirectly, cGMP. In Trichodesmium erythraeum (strain IMS101), this protein is Guanylate kinase.